The primary structure comprises 1180 residues: RecBCD enzyme subunit RecB (1180 aa).

The 449-residue stretch at 2-450 (SDVAETLDPL…YTLDTNWRSA (449 aa)) folds into the UvrD-like helicase ATP-binding domain. The interval 2–853 (SDVAETLDPL…KGEPQDAAGL (852 aa)) is ATPase, DNA-binding and helicase activity, interacts with RecC. Residue 23–30 (ASAGTGKT) coordinates ATP. The DNA-binding element occupies 252–254 (IDR). W447 is a binding site for ATP. In terms of domain architecture, UvrD-like helicase C-terminal spans 480–746 (SAGKNQALRF…QIVTIHKSKG (267 aa)). 3 consecutive DNA-binding regions follow at residues 511-512 (VG), 560-561 (SR), and R761. Positions 900–1180 (NWRVTSYSGL…MFAGMTLEEA (281 aa)) are nuclease activity, interacts with RecD and RecA. Mg(2+) is bound by residues H956, D1067, D1080, and Y1081. The active-site For nuclease activity is D1080.

The protein belongs to the helicase family. UvrD subfamily. Heterotrimer of RecB, RecC and RecD. All subunits contribute to DNA-binding. The C-terminus interacts with RecA. Interacts with YgbT (Cas1). In terms of assembly, (Microbial infection) Lambda virus GamS protein interacts with the enzyme without displacing any of the subunits. The cofactor is Mg(2+).

The catalysed reaction is Exonucleolytic cleavage (in the presence of ATP) in either 5'- to 3'- or 3'- to 5'-direction to yield 5'-phosphooligonucleotides.. It carries out the reaction Couples ATP hydrolysis with the unwinding of duplex DNA by translocating in the 3'-5' direction.. It catalyses the reaction ATP + H2O = ADP + phosphate + H(+). With respect to regulation, after reacting with DNA bearing a Chi site the holoenzyme is disassembled and loses exonuclease activity, DNA unwinding and Chi-directed DNA cleavage; RecB remains complexed with ssDNA, which may prevent holoenzyme reassembly. High levels of Mg(2+) (13 mM MgCl(2+)) or incubation with DNase allows holoenzyme reassembly, suggesting it is DNA bound to RecB that prevents reassembly. (Microbial infection) RecBCD is inhibited by the lambda virus gam protein (both GamL and GamS isoforms); in vitro a short preincubation prior to adding DNA results in maximal inhibition. In terms of biological role, a helicase/nuclease that prepares dsDNA breaks (DSB) for recombinational DNA repair. Binds to DSBs and unwinds DNA via a rapid (&gt;1 kb/second) and highly processive (&gt;30 kb) ATP-dependent bidirectional helicase. Unwinds dsDNA until it encounters a Chi (crossover hotspot instigator, 5'-GCTGGTGG-3') sequence from the 3' direction. Cuts ssDNA a few nucleotides 3' to Chi site, by nicking one strand or switching the strand degraded (depending on the reaction conditions). The properties and activities of the enzyme are changed at Chi. The Chi-altered holoenzyme produces a long 3'-ssDNA overhang which facilitates RecA-binding to the ssDNA for homologous DNA recombination and repair. Holoenzyme degrades any linearized DNA that is unable to undergo homologous recombination. In the holoenzyme this subunit contributes ATPase, 3'-5' helicase, exonuclease activity and loads RecA onto ssDNA. The RecBC complex requires the RecD subunit for nuclease activity, but can translocate along ssDNA in both directions. The RecBCD complex does not unwind G-quadruplex DNA. Probably interacts with a component of retron Ec48 which moniters RecBCD stability; when RecB is missing or impaired the retron is activated and becomes toxic. The polypeptide is RecBCD enzyme subunit RecB (Escherichia coli (strain K12)).